The primary structure comprises 419 residues: MFMNDQVYDLLRQAVIASRTLVDMSNKTIKNILRNTADHLLENQNTILEANAEDLSRIDPSDQKYDRLKLTKERLQTMADDMRSVAVLSSPIGKVLHEITRPNGMLIRKVSVPFGVIGIIYEARPNVTFDVFSLCFKSGNACVLKGGSDASLSNHALVNIIHQVLQKYRININTCILLPPNREVTAALLGAVGLVDLIIPRGSSSLINFVRNNTRVPVIETGAGICHTYFDKKGDKDKGRAIINNAKTRRVSVCNALDCLVLHRERLNDLPYICGDLQKNNVIIYADEPSYKVLVTCYPANLIQLAVEESFGTEFLDYKMSIRTVNNIREAIDHITRYSSKHSECIVSESPKTINFFLQKIDAACVYANVSTAFTDGSQFGMGAEIGISTQKLHARGPMALEELTTYKYLIEGSGQIRS.

It belongs to the gamma-glutamyl phosphate reductase family.

The protein resides in the cytoplasm. The catalysed reaction is L-glutamate 5-semialdehyde + phosphate + NADP(+) = L-glutamyl 5-phosphate + NADPH + H(+). It functions in the pathway amino-acid biosynthesis; L-proline biosynthesis; L-glutamate 5-semialdehyde from L-glutamate: step 2/2. Functionally, catalyzes the NADPH-dependent reduction of L-glutamate 5-phosphate into L-glutamate 5-semialdehyde and phosphate. The product spontaneously undergoes cyclization to form 1-pyrroline-5-carboxylate. This chain is Gamma-glutamyl phosphate reductase, found in Azobacteroides pseudotrichonymphae genomovar. CFP2.